Here is a 1310-residue protein sequence, read N- to C-terminus: Clustered mitochondria protein homolog (1310 aa).

The region spanning 375–619 (DITRSQESYL…RVTPLDVVWQ (245 aa)) is the Clu domain. The span at 662 to 682 (KAQEDAANKEQPSETTESKEG) shows a compositional bias: basic and acidic residues. 2 disordered regions span residues 662-692 (KAQEDAANKEQPSETTESKEGESEEKAEEAL) and 931-960 (VANGVNGASHDESKKKKKKGGDSKSPSRAV). TPR repeat units lie at residues 1033 to 1066 (AKLYHQLSMLYYQTDEKEAAVELARKAVIVTERT), 1075 to 1108 (ILAYLNLSLFEHASGNTKTALVYIKHAMDLWKII), and 1117 to 1150 (ITTMNNAAVMLQHLKQYSDSRKWFEASLAVCESL). 2 disordered regions span residues 1245–1266 (VQPQVGQTAPEASGAKGAANAS) and 1281–1310 (GGDATSSRSKQKKRAAASNPKLRGSKKSSA).

Belongs to the CLU family. May associate with the eukaryotic translation initiation factor 3 (eIF-3) complex.

It is found in the cytoplasm. In terms of biological role, mRNA-binding protein involved in proper cytoplasmic distribution of mitochondria. The chain is Clustered mitochondria protein homolog from Aspergillus fumigatus (strain CBS 144.89 / FGSC A1163 / CEA10) (Neosartorya fumigata).